Reading from the N-terminus, the 725-residue chain is MANPPVTEWKQSEAIPAHVAQETGCFTTLPIRIHKNNSIADQATLESINDWKQHLDDGWESRSGSAISKVGNWCSFIFSEALPERLPCITYLANIGNIHDDATEDATLDEAITSHAQFSTALSLDTDDEPSLQEAKTRRFRHLVSNCVLEILSIDRDMGTRMIVSYQKKWLDVMEHLNYEGIESLEEYLEFRMLNGGMEPFWLMCQFGMGLNIPDAELAPTRHIFEPAEWALVLTNDYWSWGREYNASLTKGSRIVNSIELLSRLRNISYDEAKEVVRDLITTYEAEYERRVQDFLRENPSTQMYLRQFIEVAGLVVAGNHYWCANCPRHHAWKEQDQAVHAVDQLEEFPAVEAQSPSSATHTAAPQEDPPVTEAPSPISSPSSSSSAKPSSSSAADSSSCTSTSQHSPSETDSTPPSSLHLLKSPHPVDAPCTYMSSLPSKGVRSTLIHALNQWFQISSRNVTLIKEITSMLHNSSLILDDIQDQSPLRRGKPAAHTIFSTAQSINSSTYLFVRAMQMVSENFESSVQMSFLEILQRMHIGQSYDLHWRFHLQCPTEDEYFEMVDAKTGCMFEMLLLLMSSKSRHVKDHSFTSFIRTFGRYFQVRDDYMNLTSGEYTAGKGWCEDLDEGKLSYPLIECQKMAPASFTQIMGIFRAKQADTAQLSDETKKYVIELFRKSGVLDSTLDWIMEMERQLLMEVKRLEGVMGDSNPMLYVLLQTLSLNQ.

A terpene cyclase region spans residues 1–333 (MANPPVTEWK…CANCPRHHAW (333 aa)). Residue aspartate 100 participates in Mg(2+) binding. Substrate is bound by residues aspartate 100, asparagine 236, 240 to 244 (SWGRE), and 329 to 330 (RH). A DDXXD 1 motif is present at residues 100–104 (DDATE). An NSE/DTE motif is present at residues 236–244 (NDYWSWGRE). Residues 334–722 (KEQDQAVHAV…MLYVLLQTLS (389 aa)) form a prenyltransferase region. The tract at residues 352–426 (VEAQSPSSAT…PSSLHLLKSP (75 aa)) is disordered. Over residues 355–364 (QSPSSATHTA) the composition is skewed to polar residues. Residues 375–419 (APSPISSPSSSSSAKPSSSSAADSSSCTSTSQHSPSETDSTPPSS) show a composition bias toward low complexity. Isopentenyl diphosphate is bound by residues lysine 442, arginine 445, and histidine 474. 2 residues coordinate Mg(2+): aspartate 481 and aspartate 485. The DDXXD 2 signature appears at 481–485 (DDIQD). Arginine 490 contacts dimethylallyl diphosphate. Arginine 491 is an isopentenyl diphosphate binding site. Dimethylallyl diphosphate-binding residues include lysine 568, threonine 569, glutamine 604, asparagine 611, lysine 621, and lysine 631.

This sequence in the N-terminal section; belongs to the terpene synthase family. In the C-terminal section; belongs to the FPP/GGPP synthase family. In terms of assembly, hexamer. Mg(2+) serves as cofactor.

It carries out the reaction isopentenyl diphosphate + (2E,6E)-farnesyl diphosphate = (2E,6E,10E)-geranylgeranyl diphosphate + diphosphate. The enzyme catalyses isopentenyl diphosphate + (2E,6E,10E)-geranylgeranyl diphosphate = (2E,6E,10E,14E)-geranylfarnesyl diphosphate + diphosphate. It participates in secondary metabolite biosynthesis; terpenoid biosynthesis. Functionally, bifunctional terpene synthase; part of the gene cluster that mediates the biosynthesis of betaestacins. The bifunctional terpene synthase btcA converts isopentenyl diphosphate (IPP) and dimethylallyl diphosphate (DMAPP) into the sesterterpene betaestacin I. The C-terminal prenyltransferase (PT) domain of btcA catalyzes formation of GFPP, whereas the N-terminal terpene cyclase (TC) domain catalyzes the cyclization of GFPP into betaestacin I. The cytochrome P450 monooxygenase btcB is then responsible for the six-step oxidation of betaestacin I to yield betaestacin II. The roles of the cytochrome P450 monooxygenase btcC and the alpha-ketoglutarate-dependent dioxygenase btcD have not been identified yet. This is Sesterterpene synthase btcA from Neocamarosporium betae (Beet black rot fungus).